The sequence spans 201 residues: Protein CIMAP1C (201 aa).

The STPGR repeat unit spans residues 171–186; the sequence is PAPTMSSRSGHTSPAR. Residues 172 to 201 form a disordered region; the sequence is APTMSSRSGHTSPARLLSPWASSTRPTYAR. Polar residues predominate over residues 191 to 201; the sequence is WASSTRPTYAR.

The protein belongs to the CIMAP family.

This Bos taurus (Bovine) protein is Protein CIMAP1C (CIMAP1C).